The chain runs to 397 residues: Ubiquitin-like modifier-activating enzyme 5 (397 aa).

ATP-binding residues include G77, D98, K121, N144, and N178. The Zn(2+) site is built by C220 and C223. C244 (glycyl thioester intermediate) is an active-site residue. Residues C297 and C302 each contribute to the Zn(2+) site.

Belongs to the ubiquitin-activating E1 family. UBA5 subfamily.

E1-like enzyme which activates UFM1. The sequence is that of Ubiquitin-like modifier-activating enzyme 5 from Culex quinquefasciatus (Southern house mosquito).